We begin with the raw amino-acid sequence, 267 residues long: MPIQRKELPDVGELVVATVKEVYDYGAYLTLDEYGGLEAYLPWSEVASRWVRSIHDVVKPGQKIVVKVIRVNKRKKQVDVSLKRVTDSERRRKMMEWKRAQKAERILELVAQKLGKSLEEAYEAVGKKLEDYYGELMAAFEEVVIRGEQALREAGVPEEWVQPLLEEIKRHVEVKRVKIAGVLTVRSLAGDGIERVKKVLLTVKDAIENSSPDIKVKLYTVGAPRYRLELEAYDYKTLEKALAKALEEGEETAKSLGVEFSFTREKQ.

Residues glycine 12–lysine 83 form the S1 motif domain.

The protein belongs to the eIF-2-alpha family. Heterotrimer composed of an alpha, a beta and a gamma chain.

EIF-2 functions in the early steps of protein synthesis by forming a ternary complex with GTP and initiator tRNA. This is Translation initiation factor 2 subunit alpha from Hyperthermus butylicus (strain DSM 5456 / JCM 9403 / PLM1-5).